The chain runs to 82 residues: MAGLKVFSFALLLILTFSLIDVEGYNVENGGSLCCNNHPKFGKCNTKNDDQRCNSWCLNGCDNGKGGYCKSMSHGGQCHCYC.

Positions 1–24 (MAGLKVFSFALLLILTFSLIDVEG) are cleaved as a signal peptide. 4 disulfide bridges follow: C34–C82, C44–C69, C53–C78, and C57–C80.

Belongs to the DEFL family.

It is found in the secreted. In Arabidopsis thaliana (Mouse-ear cress), this protein is Defensin-like protein 22.